Reading from the N-terminus, the 661-residue chain is Vasorin (661 aa).

The first 19 residues, 1 to 19, serve as a signal peptide directing secretion; sequence MWHLLVWIILLATAQQMIT. An LRRNT domain is found at 20-50; the sequence is EGCPAGCQCNTPQTVFCLARKNSNFPRSVPP. The Extracellular portion of the chain corresponds to 20 to 563; the sequence is EGCPAGCQCN…VTQSQEGNLT (544 aa). LRR repeat units lie at residues 52–72, 75–96, 99–120, 123–144, 147–168, 169–189, 191–212, 215–237, 238–258, and 259–281; these read TLNL…SFIG, GLHL…VFRN, NLSN…TFQG, RLER…AFKG, SLLE…SLPH, LLLL…VFNA, NIES…LLSG, NLHE…HGLT, KLNI…LSNL, and PALQ…LFRS. N99 carries N-linked (GlcNAc...) asparagine glycosylation. Positions 293-346 constitute an LRRCT domain; sequence NPFNCVCSLGWLSEWMRVSGVVLLRPDETRCHFPPKNAGKTLRQLRDSEYGCPA. Positions 348-385 are enriched in low complexity; sequence TTIQMPSTMPPSTTTGPPTTTKHLQTEAPTTASTTTTT. Positions 348–395 are disordered; sequence TTIQMPSTMPPSTTTGPPTTTKHLQTEAPTTASTTTTTIPHQEQEEDT. Residues 403–440 enclose the EGF-like domain; the sequence is EDTLCPPQTCLNGGSCHLDPTGQLECECPPGFQGTYCE. Intrachain disulfides connect C407/C418, C412/C428, and C430/C439. Residues 455–543 form the Fibronectin type-III domain; that stretch reads EQVKIIEVTV…EEDLCTETHT (89 aa). N518 and N561 each carry an N-linked (GlcNAc...) asparagine glycan. A helical transmembrane segment spans residues 564–584; the sequence is LVLVPAVAAGILLSAAVAAAA. At 585–661 the chain is on the cytoplasmic side; that stretch reads CYARRRKGKG…PTGRLPHSYF (77 aa). Residues 591 to 661 are disordered; sequence KGKGHSVEDG…PTGRLPHSYF (71 aa). Positions 606-623 are enriched in basic and acidic residues; sequence DGVKKGLDGKGEVKKLSE.

It is found in the membrane. May act as an inhibitor of TGF-beta signaling. This is Vasorin (vasn) from Xenopus tropicalis (Western clawed frog).